A 252-amino-acid chain; its full sequence is Imidazole glycerol phosphate synthase subunit HisF (252 aa).

Residues Asp11 and Asp130 contribute to the active site.

The protein belongs to the HisA/HisF family. Heterodimer of HisH and HisF.

The protein localises to the cytoplasm. The catalysed reaction is 5-[(5-phospho-1-deoxy-D-ribulos-1-ylimino)methylamino]-1-(5-phospho-beta-D-ribosyl)imidazole-4-carboxamide + L-glutamine = D-erythro-1-(imidazol-4-yl)glycerol 3-phosphate + 5-amino-1-(5-phospho-beta-D-ribosyl)imidazole-4-carboxamide + L-glutamate + H(+). It participates in amino-acid biosynthesis; L-histidine biosynthesis; L-histidine from 5-phospho-alpha-D-ribose 1-diphosphate: step 5/9. Its function is as follows. IGPS catalyzes the conversion of PRFAR and glutamine to IGP, AICAR and glutamate. The HisF subunit catalyzes the cyclization activity that produces IGP and AICAR from PRFAR using the ammonia provided by the HisH subunit. The chain is Imidazole glycerol phosphate synthase subunit HisF from Geobacillus sp. (strain WCH70).